Reading from the N-terminus, the 421-residue chain is MPFLHGFRRIIFEYQPLVDAILGSLGIQDPERQESLDRPSYVASEESRILVLTELLERKAHSPFYQEGVSNALLKMAELGLTRAADVLLRHGANLNFEDPVTYYTALHIAVLRNQPDMVELLVHHGADINRRDRIHESSPLDLASEEPERLPCLQRLLDLGADVNAADKHGKTALLHALASSDGVQIHNTENIRLLLEGGADVKATTKDGDTVFTCIIFLLGETVGGDKEEAQMINRFCFQVTRLLLAHGADPSECPAHESLTHICLKSFKLHFPLLRFLLESGAAYNCSLHGASCWSGFHIIFERLCSHPGCTEDESHTDLLRKAETVLDLMVTNSQKLQLPENFDIHPVGSLAEKIQALHFSLRQLESYPPPLKHLCRVAIRLYLQPWPVDVKVKALPLPDRLKWYLLSEHSGSMEDDI.

6 ANK repeats span residues 67 to 97 (EGVSNALLKMAELGLTRAADVLLRHGANLNF), 102 to 131 (TYYTALHIAVLRNQPDMVELLVHHGADINR), 136 to 166 (HESSPLDLASEEPERLPCLQRLLDLGADVNA), 170 to 205 (HGKTALLHALASSDGVQIHNTENIRLLLEGGADVKA), 226 to 255 (GGDKEEAQMINRFCFQVTRLLLAHGADPSE), and 260 to 289 (ESLTHICLKSFKLHFPLLRFLLESGAAYNC). Residues 360–415 (ALHFSLRQLESYPPPLKHLCRVAIRLYLQPWPVDVKVKALPLPDRLKWYLLSEHSG) form the SOCS box domain.

This sequence belongs to the ankyrin SOCS box (ASB) family. In terms of assembly, binds APS. Identified in a complex with ELOB and ELOC. Interacts with CUL5 and RNF7. Interacts with SQSTM1.

It is found in the cytoplasm. The protein operates within protein modification; protein ubiquitination. Its function is as follows. Probable substrate-recognition component of a SCF-like ECS (Elongin-Cullin-SOCS-box protein) E3 ubiquitin-protein ligase complex which mediates the ubiquitination and subsequent proteasomal degradation of target proteins. May play a role in the regulation of cell proliferation and autophagy by promoting the ubiquitination and degradation of SQSTM1. This chain is Ankyrin repeat and SOCS box protein 6 (ASB6), found in Pongo abelii (Sumatran orangutan).